The chain runs to 132 residues: Small ribosomal subunit protein uS8 (132 aa).

The protein belongs to the universal ribosomal protein uS8 family. Part of the 30S ribosomal subunit. Contacts proteins S5 and S12.

One of the primary rRNA binding proteins, it binds directly to 16S rRNA central domain where it helps coordinate assembly of the platform of the 30S subunit. The polypeptide is Small ribosomal subunit protein uS8 (Clostridium perfringens (strain ATCC 13124 / DSM 756 / JCM 1290 / NCIMB 6125 / NCTC 8237 / Type A)).